The chain runs to 199 residues: Protein GrpE (199 aa).

Basic and acidic residues predominate over residues 1 to 24 (MSKQNKKDWKKFKDEHKEEHKVEN). Positions 1–47 (MSKQNKKDWKKFKDEHKEEHKVENEILEEEIDEKSQHQEPALGHPSY) are disordered.

The protein belongs to the GrpE family. In terms of assembly, homodimer.

Its subcellular location is the cytoplasm. Its function is as follows. Participates actively in the response to hyperosmotic and heat shock by preventing the aggregation of stress-denatured proteins, in association with DnaK and GrpE. It is the nucleotide exchange factor for DnaK and may function as a thermosensor. Unfolded proteins bind initially to DnaJ; upon interaction with the DnaJ-bound protein, DnaK hydrolyzes its bound ATP, resulting in the formation of a stable complex. GrpE releases ADP from DnaK; ATP binding to DnaK triggers the release of the substrate protein, thus completing the reaction cycle. Several rounds of ATP-dependent interactions between DnaJ, DnaK and GrpE are required for fully efficient folding. This chain is Protein GrpE, found in Legionella pneumophila (strain Paris).